The following is a 461-amino-acid chain: Pup--protein ligase (461 aa).

Mg(2+) is bound at residue Glu9. Arg53 contacts ATP. Tyr55 is a binding site for Mg(2+). Asp57 acts as the Proton acceptor in catalysis. Glu63 is a binding site for Mg(2+). Positions 66 and 420 each coordinate ATP.

This sequence belongs to the Pup ligase/Pup deamidase family. Pup-conjugating enzyme subfamily.

The enzyme catalyses ATP + [prokaryotic ubiquitin-like protein]-L-glutamate + [protein]-L-lysine = ADP + phosphate + N(6)-([prokaryotic ubiquitin-like protein]-gamma-L-glutamyl)-[protein]-L-lysine.. Its pathway is protein degradation; proteasomal Pup-dependent pathway. It participates in protein modification; protein pupylation. Functionally, catalyzes the covalent attachment of the prokaryotic ubiquitin-like protein modifier Pup to the proteasomal substrate proteins, thereby targeting them for proteasomal degradation. This tagging system is termed pupylation. The ligation reaction involves the side-chain carboxylate of the C-terminal glutamate of Pup and the side-chain amino group of a substrate lysine. In Renibacterium salmoninarum (strain ATCC 33209 / DSM 20767 / JCM 11484 / NBRC 15589 / NCIMB 2235), this protein is Pup--protein ligase.